A 306-amino-acid polypeptide reads, in one-letter code: Proteasome subunit beta (306 aa).

The propeptide at 1–67 is removed in mature form; by autocatalysis; the sequence is MTWPNRDQPA…GLPTDAVPHG (67 aa). T68 (nucleophile) is an active-site residue.

Belongs to the peptidase T1B family. The 20S proteasome core is composed of 14 alpha and 14 beta subunits that assemble into four stacked heptameric rings, resulting in a barrel-shaped structure. The two inner rings, each composed of seven catalytic beta subunits, are sandwiched by two outer rings, each composed of seven alpha subunits. The catalytic chamber with the active sites is on the inside of the barrel. Has a gated structure, the ends of the cylinder being occluded by the N-termini of the alpha-subunits. Is capped by the proteasome-associated ATPase, ARC.

The protein resides in the cytoplasm. The catalysed reaction is Cleavage of peptide bonds with very broad specificity.. Its pathway is protein degradation; proteasomal Pup-dependent pathway. Its activity is regulated as follows. The formation of the proteasomal ATPase ARC-20S proteasome complex, likely via the docking of the C-termini of ARC into the intersubunit pockets in the alpha-rings, may trigger opening of the gate for substrate entry. Interconversion between the open-gate and close-gate conformations leads to a dynamic regulation of the 20S proteasome proteolysis activity. In terms of biological role, component of the proteasome core, a large protease complex with broad specificity involved in protein degradation. The chain is Proteasome subunit beta from Mycolicibacterium vanbaalenii (strain DSM 7251 / JCM 13017 / BCRC 16820 / KCTC 9966 / NRRL B-24157 / PYR-1) (Mycobacterium vanbaalenii).